A 96-amino-acid polypeptide reads, in one-letter code: Aspartyl/glutamyl-tRNA(Asn/Gln) amidotransferase subunit C (96 aa).

It belongs to the GatC family. In terms of assembly, heterotrimer of A, B and C subunits.

It catalyses the reaction L-glutamyl-tRNA(Gln) + L-glutamine + ATP + H2O = L-glutaminyl-tRNA(Gln) + L-glutamate + ADP + phosphate + H(+). The enzyme catalyses L-aspartyl-tRNA(Asn) + L-glutamine + ATP + H2O = L-asparaginyl-tRNA(Asn) + L-glutamate + ADP + phosphate + 2 H(+). In terms of biological role, allows the formation of correctly charged Asn-tRNA(Asn) or Gln-tRNA(Gln) through the transamidation of misacylated Asp-tRNA(Asn) or Glu-tRNA(Gln) in organisms which lack either or both of asparaginyl-tRNA or glutaminyl-tRNA synthetases. The reaction takes place in the presence of glutamine and ATP through an activated phospho-Asp-tRNA(Asn) or phospho-Glu-tRNA(Gln). The polypeptide is Aspartyl/glutamyl-tRNA(Asn/Gln) amidotransferase subunit C (Wolinella succinogenes (strain ATCC 29543 / DSM 1740 / CCUG 13145 / JCM 31913 / LMG 7466 / NCTC 11488 / FDC 602W) (Vibrio succinogenes)).